A 1568-amino-acid polypeptide reads, in one-letter code: Plexin-C1 (1568 aa).

Residues 1–34 (MEVSRRKAPPRPPRPAAPLPLLAYLLALAAPGRG) form the signal peptide. One can recognise a Sema domain in the interval 35 to 452 (ADEPVWRSEQ…AGKEVRRIRV (418 aa)). Topologically, residues 35-944 (ADEPVWRSEQ…YVEQESVPST (910 aa)) are extracellular. A disulfide bridge links Cys64 with Cys87. N-linked (GlcNAc...) asparagine glycosylation is found at Asn86, Asn141, and Asn149. Intrachain disulfides connect Cys156-Cys194, Cys226-Cys354, and Cys283-Cys329. N-linked (GlcNAc...) asparagine glycans are attached at residues Asn241 and Asn252. 2 N-linked (GlcNAc...) asparagine glycosylation sites follow: Asn386 and Asn407. Disulfide bonds link Cys455-Cys472, Cys461-Cys506, Cys464-Cys481, and Cys475-Cys487. 9 N-linked (GlcNAc...) asparagine glycosylation sites follow: Asn548, Asn582, Asn653, Asn692, Asn771, Asn796, Asn821, Asn871, and Asn890. Residues 945 to 965 (WYFLIVLPVLLVIVIFAAVGV) form a helical membrane-spanning segment. At 966 to 1568 (TRHKSKELSR…FDEKKKCKWM (603 aa)) the chain is on the cytoplasmic side. Ser978 bears the Phosphoserine mark.

This sequence belongs to the plexin family. Monomer. Homodimer. Interacts with SEMA7A. N-glycosylated. Detected in heart, brain, lung, spleen and placenta.

It localises to the membrane. Functionally, receptor for SEMA7A, for smallpox semaphorin A39R, vaccinia virus semaphorin A39R and for herpesvirus Sema protein. Binding of semaphorins triggers cellular responses leading to the rearrangement of the cytoskeleton and to secretion of IL6 and IL8. The polypeptide is Plexin-C1 (PLXNC1) (Homo sapiens (Human)).